The following is a 152-amino-acid chain: Endoribonuclease YbeY (152 aa).

Zn(2+)-binding residues include His-113, His-117, and His-123.

Belongs to the endoribonuclease YbeY family. It depends on Zn(2+) as a cofactor.

It is found in the cytoplasm. Functionally, single strand-specific metallo-endoribonuclease involved in late-stage 70S ribosome quality control and in maturation of the 3' terminus of the 16S rRNA. This chain is Endoribonuclease YbeY, found in Delftia acidovorans (strain DSM 14801 / SPH-1).